The primary structure comprises 258 residues: 2-oxo-tetronate isomerase (258 aa).

The active-site Proton donor/acceptor is Glu-143. Mg(2+) contacts are provided by Glu-143, Asp-178, Gln-204, and Glu-240. Glu-240 (proton donor/acceptor) is an active-site residue.

It belongs to the hyi family. OtnI subfamily.

The catalysed reaction is 2-dehydro-L-erythronate = 3-dehydro-L-erythronate. The enzyme catalyses 2-dehydro-D-erythronate = 3-dehydro-D-erythronate. Catalyzes the isomerization of 2-oxo-tetronate to 3-oxo-tetronate. This Haemophilus influenzae (strain ATCC 51907 / DSM 11121 / KW20 / Rd) protein is 2-oxo-tetronate isomerase.